The following is a 258-amino-acid chain: Indole-3-glycerol phosphate synthase (258 aa).

This sequence belongs to the TrpC family.

The enzyme catalyses 1-(2-carboxyphenylamino)-1-deoxy-D-ribulose 5-phosphate + H(+) = (1S,2R)-1-C-(indol-3-yl)glycerol 3-phosphate + CO2 + H2O. It functions in the pathway amino-acid biosynthesis; L-tryptophan biosynthesis; L-tryptophan from chorismate: step 4/5. The protein is Indole-3-glycerol phosphate synthase of Exiguobacterium sibiricum (strain DSM 17290 / CCUG 55495 / CIP 109462 / JCM 13490 / 255-15).